The following is a 79-amino-acid chain: Sulfur carrier protein TusA (79 aa).

The Cysteine persulfide intermediate role is filled by cysteine 17.

This sequence belongs to the sulfur carrier protein TusA family.

It is found in the cytoplasm. Its function is as follows. Sulfur carrier protein which probably makes part of a sulfur-relay system. The sequence is that of Sulfur carrier protein TusA from Haemophilus influenzae (strain ATCC 51907 / DSM 11121 / KW20 / Rd).